The chain runs to 165 residues: Neurotrophin-3 (165 aa).

Residues 1 to 3 form the signal peptide; that stretch reads IQS. The propeptide occupies 4-119; it reads TSMDQGSLSE…VLNRTSRRKR (116 aa). N-linked (GlcNAc...) asparagine glycosylation occurs at N112.

The protein belongs to the NGF-beta family.

It localises to the secreted. Functionally, seems to promote the survival of visceral and proprioceptive sensory neurons. The sequence is that of Neurotrophin-3 (NTF3) from Anilius scytale (Coral cylinder snake).